The primary structure comprises 596 residues: Alkaline phosphatase 4 (596 aa).

The first 20 residues, 1 to 20, serve as a signal peptide directing secretion; sequence MHCLVILGFLLGSLVAFSWA. Mg(2+) is bound at residue aspartate 93. A Zn(2+)-binding site is contributed by aspartate 93. Serine 144 functions as the Phosphoserine intermediate in the catalytic mechanism. Residues histidine 202 and threonine 204 each contribute to the Mg(2+) site. 2 N-linked (GlcNAc...) asparagine glycosylation sites follow: asparagine 262 and asparagine 297. Glutamate 369 lines the Mg(2+) pocket. Positions 374 and 378 each coordinate Zn(2+). Asparagine 401 is a glycosylation site (N-linked (GlcNAc...) asparagine). Residues aspartate 415 and histidine 416 each contribute to the Zn(2+) site. N-linked (GlcNAc...) asparagine glycosylation is found at asparagine 464 and asparagine 470. Residue histidine 504 participates in Zn(2+) binding. Cysteine 539 and cysteine 550 are oxidised to a cystine. Basic and acidic residues predominate over residues 548-566; sequence DSCEDHKDGQKDRPLDKPN. The segment at 548–570 is disordered; sequence DSCEDHKDGQKDRPLDKPNPKRN. The GPI-anchor amidated asparagine moiety is linked to residue asparagine 570. Residues 571 to 591 traverse the membrane as a helical segment; that stretch reads GATVVGASLIPILTAATAAIL. Residues 571 to 596 constitute a propeptide, removed in mature form; sequence GATVVGASLIPILTAATAAILRGRGL.

The protein belongs to the alkaline phosphatase family. In terms of assembly, homodimer. It depends on Mg(2+) as a cofactor. Zn(2+) serves as cofactor. In terms of tissue distribution, ellipsoid body ring neurons in the adult brain and in the lower Malpighian tubule and ureter.

It is found in the cell membrane. It carries out the reaction a phosphate monoester + H2O = an alcohol + phosphate. Important role in neural and renal epithelial function. This chain is Alkaline phosphatase 4, found in Drosophila melanogaster (Fruit fly).